Here is a 69-residue protein sequence, read N- to C-terminus: Cold shock-like protein CspC (69 aa).

Positions 6–66 constitute a CSD domain; the sequence is GQVKWFNESK…GQKGPAAVNV (61 aa).

The protein localises to the cytoplasm. The polypeptide is Cold shock-like protein CspC (cspC) (Buchnera aphidicola subsp. Acyrthosiphon pisum (strain APS) (Acyrthosiphon pisum symbiotic bacterium)).